The chain runs to 1340 residues: Thioester-containing protein 1 allele S1 (1340 aa).

The N-terminal stretch at 1 to 21 is a signal peptide; it reads MWQFIRSRILTVIIFIGAAHG. Residues Asn68, Asn199, Asn242, Asn312, and Asn481 are each glycosylated (N-linked (GlcNAc...) asparagine). Residues 580 to 609 form a may contain the cleavage site region; the sequence is ENEFDIFHSLGLFARTLDDILFDSANEKTG. N-linked (GlcNAc...) asparagine glycosylation is found at Asn637, Asn728, Asn813, and Asn828. Residues 859–862 constitute a cross-link (isoglutamyl cysteine thioester (Cys-Gln)); it reads CGEQ. Intrachain disulfides connect Cys1217-Cys1283, Cys1326-Cys1338, and Cys1329-Cys1334.

As to quaternary structure, heterodimer of a TEP1-N chain and an TEP1-C chain non-covalently linked. Forms a complex composed of TEP1-N and TEP1-C heterodimer, LRIM1 and APL1C; the interaction stabilizes TEP1-N and TEP1-C heterodimer, prevents its binding to tissues while circulating in the hemolymph and protects the thioester bond from hydrolysis. Mature TEP1 and to a lesser extent full-length TEP1 interact with SPCLIP1; the interaction is induced by microbial infection. In terms of processing, in the hemolymph, the full-length protein is cleaved by an unknow protease into a 75kDa N-terminal (TEP1-N) chain and an 80kDa C-terminal (TEP1-C) chain which remain non-covalently linked. The TEP1-C chain contains the thioester bond which covalently binds to the pathogen surface. Cleavage is induced by bacterial infection or aseptic wound injury. During embryonic and pupal development, the cleaved form is the predominant form. N-glycosylated. As to expression, specifically expressed in hemocytes (at protein level).

The protein localises to the secreted. Its function is as follows. Plays an essential role in the innate immune response to bacteria and protozoa infection. After proteolytic cleavage, the protein C-terminus binds covalently through a thioester bond to the pathogen surface resulting in pathogen clearance either by melanization or lysis. Initiate the recruitment and activation of a cascade of proteases, mostly of CLIP-domain serine proteases, which leads to the proteolytic cleavage of the prophenoloxidase (PPO) into active phenoloxidase (PO), the rate-limiting enzyme in melanin biosynthesis. In response to parasite P.berghei-mediated infection, binds to and mediates killing of ookinetes, as they egress from midgut epithelial cells into the basal labyrinth, by both lysis and melanization. During bacterial infection, binds to both Gram-positive and Gram-negative bacteria but only promotes phagocytosis of Gram-negative bacteria. Promotes the accumulation of SPCLIP1 onto the surface of P.berghei ookinetes and bacterium E.coli which leads to the melanization of the pathogen. Recruits CLIPA2 to bacteria surface. In response to bacterial infection, required for periostial hemocyte aggregation, but not for the aggregation of sessile hemocytes in non-periostial regions. During the late stage of fungus B.bassiana-mediated infection, required for the initiation of hyphae melanization by binding to the surface of hyphae and recruiting prophenoloxidase PPO to them. Plays a role in male fertility by binding to defective sperm cells and promoting their removal during spermatogenesis. Functionally, binds covalently through a thioester bond to the pathogen surface resulting in pathogen clearance. The polypeptide is Thioester-containing protein 1 allele S1 (Anopheles gambiae (African malaria mosquito)).